Here is a 683-residue protein sequence, read N- to C-terminus: MYASNKTYPSSRALPCLVEKVEAQHVDGAIRVRITTLEQKDWRQAKAAAVEAKYEAEREIQLRAHGNVKDIEITRESAFEHFATDPWAQHVGVDIEAQRERLLAEPGSRKILIIGAGFGGLLFAVRLIQTGRFTAEDITMIDSAAGFGGTWYWNRYPGLMCDTESYIYMPLLEETGYMPRNKYASGNEIREHAERIAQTYGLATRAMFRTVVEKLDWNEAEKVWTVAGSMLGIANNGQRDNMMSFQMVSQFTIMASGSFASPRVPDYPNIFDYKGKLFHTARWDYNYTGGSVENPKMLGLADKTVAIIGTGASAVQIVPQLAKYSNKLIVFQRTPAAVDARNNCPTDPVWWETETQAEGTGWQKRRQENFNAFTCNEKPLPSVNKVDDGWTRMPSFSILIGGPQGLDPDYVDRMRAVDMNRQEKIRARAHNIVQSEGSADLLTPWYPGWCKRPCFHDDYLSAFNLPNVELVDIRHNGISHFTANGLVANDIEYELDVIILSTGYTVPVTRASPSSRANIAVSGRNGTTMEAKWANGLATLHGVMTRDLPNLFFAGTSQAGACVNLVYALDQNATHVAYILANAFDRRPSDSARVIIEPTPGSEEAWAMQVLQRAAGFRGIAGCTPGYLNGYGMDASSLSPEQQINAARLAAWGEGIASYVRYLEAWRAKGDLNGIELTFFAKF.

The N-linked (GlcNAc...) asparagine glycan is linked to N5. The helical transmembrane segment at 111–131 (ILIIGAGFGGLLFAVRLIQTG) threads the bilayer. FAD is bound by residues 150–153 (TWYW), 162–163 (DT), and Y168. 160 to 162 (MCD) contributes to the NADP(+) binding site. Residue N286 is glycosylated (N-linked (GlcNAc...) asparagine). Residues 310-316 (TGASAVQ) and 333-334 (RT) each bind NADP(+). N-linked (GlcNAc...) asparagine glycans are attached at residues N525 and N572.

It belongs to the FAD-binding monooxygenase family. It depends on FAD as a cofactor.

The protein localises to the membrane. It carries out the reaction preaustinoid A + AH2 + O2 = preaustinoid A1 + A + H2O. It functions in the pathway secondary metabolite biosynthesis; terpenoid biosynthesis. Functionally, FAD-binding monooxygenase; part of the gene cluster A that mediates the biosynthesis of austinol and dehydroaustinol, two fungal meroterpenoids. The first step of the pathway is the synthesis of 3,5-dimethylorsellinic acid by the polyketide synthase ausA. 3,5-dimethylorsellinic acid is then prenylated by the polyprenyl transferase ausN. Further epoxidation by the FAD-dependent monooxygenase ausM and cyclization by the probable terpene cyclase ausL lead to the formation of protoaustinoid A. Protoaustinoid A is then oxidized to spiro-lactone preaustinoid A3 by the combined action of the FAD-binding monooxygenases ausB and ausC, and the dioxygenase ausE. Acid-catalyzed keto-rearrangement and ring contraction of the tetraketide portion of preaustinoid A3 by ausJ lead to the formation of preaustinoid A4. The aldo-keto reductase ausK, with the help of ausH, is involved in the next step by transforming preaustinoid A4 into isoaustinone which is in turn hydroxylated by the P450 monooxygenase ausI to form austinolide. Finally, the cytochrome P450 monooxygenase ausG modifies austinolide to austinol. Austinol can be further modified to dehydroaustinol which forms a diffusible complex with diorcinol that initiates conidiation. Due to genetic rearrangements of the clusters and the subsequent loss of some enzymes, the end products of the Emericella nidulans austinoid biosynthesis clusters are austinol and dehydroaustinol, even if additional enzymes, such as the O-acetyltransferase ausQ and the cytochrome P450 monooxygenase ausR are still functional. The protein is FAD-binding monooxygenase ausC of Emericella nidulans (strain FGSC A4 / ATCC 38163 / CBS 112.46 / NRRL 194 / M139) (Aspergillus nidulans).